Reading from the N-terminus, the 72-residue chain is Hypotensin-1 (72 aa).

An N-terminal signal peptide occupies residues 1 to 24; sequence MKMMIPVIFSILLLIFSLSSTAMS. Positions 25–35 are excised as a propeptide; that stretch reads LEDEQENMEER. Serine 41 is subject to Phosphoserine. Positions 53–72 are disordered; it reads ETNAKPPARFDPAAFEKSDD. A propeptide spanning residues 61 to 72 is cleaved from the precursor; that stretch reads RFDPAAFEKSDD.

It belongs to the non-disulfide-bridged peptide (NDBP) superfamily. In terms of processing, undergoes enzymatic cleavages by carboxypeptidases, endopeptidases, and aminopeptidases resulting in at least 46 fragments of this protein. As to expression, expressed by the venom gland.

Its subcellular location is the secreted. Its function is as follows. Agonist of the B2 bradykinin receptor (BDKRB2). Potentiates the hypotensive effect of bradykinin (BK) and induces a direct vasorelaxing effect independent of BK, by endothelium- and nitric oxide (NO)-dependent mechanisms in rat aortic ring preparations. Also exerts proangiogenic, antiinflammatory, and antifibrogenic activities. Does not inhibit the angiotensin-converting enzyme (ACE) but increases its activity, and inhibits neprilysin (NEP) in a non-competitive manner. Exerts intermediate cytotoxicity and pro-inflammatory effects on mouse macrophages, and increases the phagocytic activity of these murine cells. In terms of biological role, presents moderate hemolytic activity at physiological concentrations (micromolar range). Does not induce mast cell degranulation, lactate dehydrogenase (LDH) release from mast cells and antimicrobial effects. In vivo, causes intense pain (but no edema formation), when injected in mice hind paws. Also induces discomfort and anxiety in mice, as it moderately diminishes locomotion and moderately increases rearing behavior. The chain is Hypotensin-1 from Tityus serrulatus (Brazilian scorpion).